The primary structure comprises 312 residues: Probable splicing factor, arginine/serine-rich 1 (312 aa).

Positions 3 to 73 constitute an RRM 1 domain; the sequence is ARIYIGRLTS…ERVILDYSKP (71 aa). 2 disordered regions span residues 69–125 and 196–312; these read DYSK…GRPY and KMID…DGDN. A compositionally biased stretch (gly residues) spans 74–90; sequence RGGGGDRGGFGGGGRGG. Over residues 103-121 the composition is skewed to basic and acidic residues; that stretch reads GRDRFDRYDRGPPRRESRY. One can recognise an RRM 2 domain in the interval 129 to 202; that stretch reads HRVVVENLSS…RKIKMIDDSQ (74 aa). The span at 206 to 259 shows a compositional bias: basic residues; it reads SRSRSNSRSRSRSRSRDRRRSRSRSSSRSKSRSRSPPKRSRRESKSKSRSRSRS.

It belongs to the splicing factor SR family. Extensively phosphorylated on serine residues in the RS domain.

It localises to the nucleus. In terms of biological role, plays a functionally redundant role in spermatogenesis and growth rate control. This chain is Probable splicing factor, arginine/serine-rich 1 (rsp-1), found in Caenorhabditis elegans.